Here is a 312-residue protein sequence, read N- to C-terminus: Malate dehydrogenase (312 aa).

Residues 12-17 and D36 each bind NAD(+); that span reads GAGFTG. Substrate-binding residues include R87 and R93. Residues N100 and 123–125 each bind NAD(+); that span reads LTN. N125 is a substrate binding site. S149 is modified (phosphoserine). Residue R156 participates in substrate binding. The Proton acceptor role is filled by H180.

The protein belongs to the LDH/MDH superfamily. MDH type 3 family.

It carries out the reaction (S)-malate + NAD(+) = oxaloacetate + NADH + H(+). Catalyzes the reversible oxidation of malate to oxaloacetate. In Bacillus cereus (strain ZK / E33L), this protein is Malate dehydrogenase.